We begin with the raw amino-acid sequence, 746 residues long: MQAKKRYFILLSAGSCLALLFYFGGVQFRASRSHSRREEHSGRNGLHQPSPDHFWPRFPDALRPFFPWDQLENEDSSVHISPRQKRDANSSIYKGKKCRMESCFDFTLCKKNGFKVYVYPQQKGEKIAESYQNILAAIEGSRFYTSDPSQACLFVLSLDTLDRDQLSPQYVHNLRSKVQSLHLWNNGRNHLIFNLYSGTWPDYTEDVGFDIGQAMLAKASISTENFRPNFDVSIPLFSKDHPRTGGERGFLKFNTIPPLRKYMLVFKGKRYLTGIGSDTRNALYHVHNGEDVLLLTTCKHGKDWQKHKDSRCDRDNTEYEKYDYREMLHNATFCLVPRGRRLGSFRFLEALQAACVPVMLSNGWELPFSEVINWNQAAVIGDERLLLQIPSTIRSIHQDKILALRQQTQFLWEAYFSSVEKIVLTTLEIIQDRIFKHISRNSLIWNKHPGGLFVLPQYSSYLGDFPYYYANLGLKPPSKFTAVIHAVTPLVSQSQPVLKLLVAAAKSQYCAQIIVLWNCDKPLPAKHRWPATAVPVIVIEGESKVMSSRFLPYDNIITDAVLSLDEDTVLSTTEVDFAFTVWQSFPERIVGYPARSHFWDNSKERWGYTSKWTNDYSMVLTGAAIYHKYYHYLYSHYLPASLKNMVDQLANCEDILMNFLVSAVTKLPPIKVTQKKQYKETMMGQTSRASRWADPDHFAQRQSCMNTFASWFGYMPLIHSQMRLDPVLFKDQVSILRKKYRDIERL.

Residues 1–7 are Cytoplasmic-facing; the sequence is MQAKKRY. A helical; Signal-anchor for type II membrane protein transmembrane segment spans residues 8 to 28; sequence FILLSAGSCLALLFYFGGVQF. Residues 29–746 lie on the Lumenal side of the membrane; sequence RASRSHSRRE…RKKYRDIERL (718 aa). The N-linked (GlcNAc...) asparagine glycan is linked to asparagine 89. Intrachain disulfides connect cysteine 98–cysteine 103 and cysteine 109–cysteine 152. Residues leucine 166 and tyrosine 203 each coordinate a protein. 4 residues coordinate UDP: lysine 267, lysine 269, tyrosine 271, and arginine 280. A disulfide bridge connects residues cysteine 298 and cysteine 312. Histidine 300 lines the a protein pocket. UDP-binding residues include tyrosine 319 and tyrosine 324. N-linked (GlcNAc...) asparagine glycosylation is present at asparagine 330. 2 disulfides stabilise this stretch: cysteine 334–cysteine 355 and cysteine 652–cysteine 704. Positions 346 and 349 each coordinate UDP.

This sequence belongs to the glycosyltransferase 47 family. In terms of assembly, part of the heparan sulfate polymerase, a dimeric complex composed of EXT1 and EXT2. Could also form homooligomeric complexes. Interacts with NDST1. In terms of processing, N-glycosylated.

It is found in the golgi apparatus membrane. The protein localises to the golgi apparatus. It localises to the cis-Golgi network membrane. The protein resides in the endoplasmic reticulum membrane. It catalyses the reaction 3-O-{alpha-D-GlcNAc-[(1-&gt;4)-beta-D-GlcA-(1-&gt;4)-alpha-D-GlcNAc](n)-(1-&gt;4)-beta-D-GlcA-(1-&gt;3)-beta-D-Gal-(1-&gt;3)-beta-D-Gal-(1-&gt;4)-beta-D-Xyl}-L-seryl-[protein] + UDP-alpha-D-glucuronate = 3-O-{[(1-&gt;4)-beta-D-GlcA-(1-&gt;4)-alpha-D-GlcNAc](n+1)-(1-&gt;4)-beta-D-GlcA-(1-&gt;3)-beta-D-Gal-(1-&gt;3)-beta-D-Gal-(1-&gt;4)-beta-D-Xyl}-L-seryl-[protein] + UDP + H(+). The protein operates within protein modification; protein glycosylation. Its function is as follows. Glycosyltransferase forming with EXT2 the heterodimeric heparan sulfate polymerase which catalyzes the elongation of the heparan sulfate glycan backbone. Glycan backbone extension consists in the alternating transfer of (1-&gt;4)-beta-D-GlcA and (1-&gt;4)-alpha-D-GlcNAc residues from their respective UDP-sugar donors. Both EXT1 and EXT2 are required for the full activity of the polymerase since EXT1 bears the N-acetylglucosaminyl-proteoglycan 4-beta-glucuronosyltransferase activity within the complex while EXT2 carries the glucuronosyl-N-acetylglucosaminyl-proteoglycan 4-alpha-N-acetylglucosaminyltransferase activity. Heparan sulfate proteoglycans are ubiquitous components of the extracellular matrix and play an important role in tissue homeostasis and signaling. This Mus musculus (Mouse) protein is Exostosin-1.